The chain runs to 124 residues: Ribonuclease pancreatic A (124 aa).

The tract at residues 1–24 is disordered; it reads AESSAMKFERQHVDSGGSSSSNAN. Substrate is bound by residues Lys7 and Arg10. The active-site Proton acceptor is His12. Disulfide bonds link Cys26-Cys84, Cys40-Cys95, Cys58-Cys110, and Cys65-Cys72. Residues 41–45, Lys66, and Arg85 contribute to the substrate site; that span reads KPVNT. The Proton donor role is filled by His119.

The protein belongs to the pancreatic ribonuclease family. As to expression, pancreas.

It localises to the secreted. The catalysed reaction is an [RNA] containing cytidine + H2O = an [RNA]-3'-cytidine-3'-phosphate + a 5'-hydroxy-ribonucleotide-3'-[RNA].. The enzyme catalyses an [RNA] containing uridine + H2O = an [RNA]-3'-uridine-3'-phosphate + a 5'-hydroxy-ribonucleotide-3'-[RNA].. The sequence is that of Ribonuclease pancreatic A from Cavia porcellus (Guinea pig).